The sequence spans 1741 residues: DNA-directed RNA polymerase III subunit RPC1 (1741 aa).

Zn(2+) contacts are provided by cysteine 79, cysteine 82, cysteine 89, histidine 92, cysteine 119, cysteine 122, and cysteine 160. 3 residues coordinate Mg(2+): aspartate 722, aspartate 724, and aspartate 726. Positions 1099–1111 (PFEFLAHARAGRD) are bridging helix. The interval 1719 to 1741 (RHANKRSWSRGKERHASLKPKNR) is disordered.

Belongs to the RNA polymerase beta' chain family. In terms of assembly, component of the RNA polymerase III (Pol III) complex consisting of 17 subunits.

The protein localises to the nucleus. The enzyme catalyses RNA(n) + a ribonucleoside 5'-triphosphate = RNA(n+1) + diphosphate. In terms of biological role, DNA-dependent RNA polymerase catalyzes the transcription of DNA into RNA using the four ribonucleoside triphosphates as substrates. Largest and catalytic core component of RNA polymerase III which synthesizes small RNAs, such as 5S rRNA and tRNAs. Forms the polymerase active center together with the second largest subunit. A single-stranded DNA template strand of the promoter is positioned within the central active site cleft of Pol III. A bridging helix emanates from RPC1 and crosses the cleft near the catalytic site and is thought to promote translocation of Pol III by acting as a ratchet that moves the RNA-DNA hybrid through the active site by switching from straight to bent conformations at each step of nucleotide addition. This is DNA-directed RNA polymerase III subunit RPC1 (RPOA3) from Giardia intestinalis (Giardia lamblia).